Here is a 204-residue protein sequence, read N- to C-terminus: Imidazoleglycerol-phosphate dehydratase (204 aa).

This sequence belongs to the imidazoleglycerol-phosphate dehydratase family.

It localises to the cytoplasm. The enzyme catalyses D-erythro-1-(imidazol-4-yl)glycerol 3-phosphate = 3-(imidazol-4-yl)-2-oxopropyl phosphate + H2O. It participates in amino-acid biosynthesis; L-histidine biosynthesis; L-histidine from 5-phospho-alpha-D-ribose 1-diphosphate: step 6/9. In Albidiferax ferrireducens (strain ATCC BAA-621 / DSM 15236 / T118) (Rhodoferax ferrireducens), this protein is Imidazoleglycerol-phosphate dehydratase.